The sequence spans 483 residues: 6-phosphogluconate dehydrogenase, decarboxylating (483 aa).

NADP(+)-binding positions include 10–15 (GLAVMG) and 33–35 (NRT). Lys-38 bears the N6-acetyllysine mark. Ser-57 carries the phosphoserine modification. NADP(+) is bound by residues 75-77 (VKA) and Asn-103. Substrate is bound by residues Asn-103, Ser-129, and Gly-131. Ser-129 bears the Phosphoserine mark. Lys-184 functions as the Proton acceptor in the catalytic mechanism. Substrate is bound at residue 187–188 (HN). The active-site Proton donor is Glu-191. Residues Tyr-192, Lys-261, Arg-288, Arg-447, and His-453 each coordinate substrate. An NADP(+)-binding site is contributed by 478-481 (SSSY).

The protein belongs to the 6-phosphogluconate dehydrogenase family. As to quaternary structure, homodimer.

The protein resides in the cytoplasm. It carries out the reaction 6-phospho-D-gluconate + NADP(+) = D-ribulose 5-phosphate + CO2 + NADPH. The protein operates within carbohydrate degradation; pentose phosphate pathway; D-ribulose 5-phosphate from D-glucose 6-phosphate (oxidative stage): step 3/3. In terms of biological role, catalyzes the oxidative decarboxylation of 6-phosphogluconate to ribulose 5-phosphate and CO(2), with concomitant reduction of NADP to NADPH. The chain is 6-phosphogluconate dehydrogenase, decarboxylating (PGD) from Ovis aries (Sheep).